The primary structure comprises 255 residues: Protein C activator (255 aa).

Residues 1-18 (MVLIRVLANLLILHLSYA) form the signal peptide. The propeptide occupies 19–24 (QKSSEL). The 222-residue stretch at 25-246 (VIGGDECNIN…YTDWIQSIIS (222 aa)) folds into the Peptidase S1 domain. Disulfide bonds link Cys-31–Cys-162, Cys-49–Cys-65, Cys-97–Cys-253, Cys-141–Cys-207, Cys-173–Cys-186, and Cys-197–Cys-222. N-linked (GlcNAc...) asparagine glycosylation is present at Asn-45. The Charge relay system role is filled by His-64. N-linked (GlcNAc...) asparagine glycosylation is present at Asn-102. The Charge relay system role is filled by Asp-109. N-linked (GlcNAc...) asparagine glycosylation is present at Asn-153. Ser-201 serves as the catalytic Charge relay system.

Belongs to the peptidase S1 family. Snake venom subfamily. In terms of assembly, monomer. In terms of tissue distribution, expressed by the venom gland.

Its subcellular location is the secreted. Snake venom serine protease that selectively cleaves the heavy chain of protein C (PROC). This activation is thrombomodulin-independent. The protein is Protein C activator of Agkistrodon piscivorus leucostoma (Western cottonmouth).